Here is a 287-residue protein sequence, read N- to C-terminus: Elongation factor Ts (287 aa).

Positions 79-82 are involved in Mg(2+) ion dislocation from EF-Tu; it reads TDFV.

Belongs to the EF-Ts family.

It localises to the cytoplasm. Functionally, associates with the EF-Tu.GDP complex and induces the exchange of GDP to GTP. It remains bound to the aminoacyl-tRNA.EF-Tu.GTP complex up to the GTP hydrolysis stage on the ribosome. This is Elongation factor Ts from Anaplasma phagocytophilum (strain HZ).